The sequence spans 706 residues: Envelope glycoprotein H (706 aa).

The first 18 residues, 1-18 (MQLLCVFCLVLLWEVGAA), serve as a signal peptide directing secretion. The Virion surface portion of the chain corresponds to 19-682 (SLSEVKLHLD…LYEERAHVVL (664 aa)). A glycan (N-linked (GlcNAc...) asparagine; by host) is linked at Asn-60. The segment at 165–229 (DKFQYTGAMT…QSGDYSLVIV (65 aa)) is interaction with gL. A disulfide bond links Cys-278 and Cys-335. Asn-435 carries an N-linked (GlcNAc...) asparagine; by host glycan. Cystine bridges form between Cys-454-Cys-478 and Cys-534-Cys-587. 2 N-linked (GlcNAc...) asparagine; by host glycosylation sites follow: Asn-549 and Asn-604. The cysteines at positions 612 and 615 are disulfide-linked. A glycan (N-linked (GlcNAc...) asparagine; by host) is linked at Asn-664. Residues 683–703 (AIILYFIAFALGIFLVHKIVM) form a helical membrane-spanning segment. The Intravirion portion of the chain corresponds to 704-706 (FFL).

The protein belongs to the herpesviridae glycoprotein H family. Interacts with glycoprotein L (gL); this interaction is necessary for the correct processing and cell surface expression of gH. The heterodimer gH/gL seems to interact with gB trimers during fusion. The heterodimer gH/gL interacts with host EPHA2 to facilitate virus internalization and fusion. Interacts with glycoprotein 42/BZLF2. In terms of processing, N-glycosylated, O-glycosylated, and sialylated.

The protein localises to the virion membrane. Its subcellular location is the host cell membrane. It is found in the host endosome membrane. Functionally, the heterodimer glycoprotein H-glycoprotein L is required for the fusion of viral and plasma membranes leading to virus entry into the host cell. Following initial binding to host receptor, membrane fusion is mediated by the fusion machinery composed of gB and the heterodimer gH/gL. May also be involved in the fusion between the virion envelope and the outer nuclear membrane during virion morphogenesis. The heterodimer gH/gL targets also host EPHA2 to promote viral entry. The protein is Envelope glycoprotein H of Homo sapiens (Human).